The sequence spans 408 residues: 4-hydroxy-3-methylbut-2-en-1-yl diphosphate synthase (ferredoxin) (408 aa).

Over residues 1-21 the composition is skewed to polar residues; sequence MQTLPTPTTSSNTANQSTFDT. The interval 1–26 is disordered; it reads MQTLPTPTTSSNTANQSTFDTTIKRR. [4Fe-4S] cluster contacts are provided by C317, C320, C351, and E358.

The protein belongs to the IspG family. [4Fe-4S] cluster is required as a cofactor.

It carries out the reaction (2E)-4-hydroxy-3-methylbut-2-enyl diphosphate + 2 oxidized [2Fe-2S]-[ferredoxin] + H2O = 2-C-methyl-D-erythritol 2,4-cyclic diphosphate + 2 reduced [2Fe-2S]-[ferredoxin] + H(+). It participates in isoprenoid biosynthesis; isopentenyl diphosphate biosynthesis via DXP pathway; isopentenyl diphosphate from 1-deoxy-D-xylulose 5-phosphate: step 5/6. Converts 2C-methyl-D-erythritol 2,4-cyclodiphosphate (ME-2,4cPP) into 1-hydroxy-2-methyl-2-(E)-butenyl 4-diphosphate. The polypeptide is 4-hydroxy-3-methylbut-2-en-1-yl diphosphate synthase (ferredoxin) (Trichormus variabilis (strain ATCC 29413 / PCC 7937) (Anabaena variabilis)).